Reading from the N-terminus, the 626-residue chain is Protein MICRORCHIDIA 2 (626 aa).

The stretch at 579–626 forms a coiled coil; it reads MRCEEYIKKENETEQTVKSLEKELEEFKSKCAHLALLVDAKKKEMQQA.

It belongs to the MORC ATPase protein family. Homodimer and heterodimer with MORC6. Component of an RNA-directed DNA methylation (RdDM) complex that contains at least MORC6, MORC1/CRT1, MORC2, SWI3D and SUVH9. Binds directly to SUVH9. Mg(2+) serves as cofactor. Mn(2+) is required as a cofactor.

Its subcellular location is the nucleus. It is found in the endosome. Mediator of defense signaling triggered by distinct classes of R proteins. Required during hypersensitive response (HR) that confers disease resistance to turnip crinkle virus (TCV). Contributes to resistance against Pseudomonas syringae and Hyaloperonospora arabidopsidis, at early stages prior to cytosolic calcium ions Ca(2+) accumulation. Required for pathogen-associated molecular pattern (PAMP)-triggered immunity, basal resistance, non-host resistance and systemic acquired resistance (SAR). Involved in RNA-directed DNA methylation (RdDM) as a component of the RdDM machinery and required for gene silencing. May also be involved in the regulation of chromatin architecture to maintain gene silencing. Exhibits ATPase activity. The protein is Protein MICRORCHIDIA 2 of Arabidopsis thaliana (Mouse-ear cress).